The sequence spans 478 residues: 3-isopropylmalate dehydratase large subunit (478 aa).

[4Fe-4S] cluster contacts are provided by Cys-357, Cys-418, and Cys-421.

It belongs to the aconitase/IPM isomerase family. LeuC type 1 subfamily. Heterodimer of LeuC and LeuD. [4Fe-4S] cluster serves as cofactor.

It carries out the reaction (2R,3S)-3-isopropylmalate = (2S)-2-isopropylmalate. It participates in amino-acid biosynthesis; L-leucine biosynthesis; L-leucine from 3-methyl-2-oxobutanoate: step 2/4. In terms of biological role, catalyzes the isomerization between 2-isopropylmalate and 3-isopropylmalate, via the formation of 2-isopropylmaleate. The chain is 3-isopropylmalate dehydratase large subunit from Novosphingobium aromaticivorans (strain ATCC 700278 / DSM 12444 / CCUG 56034 / CIP 105152 / NBRC 16084 / F199).